Consider the following 274-residue polypeptide: Prolyl 4-hydroxylase 13 (274 aa).

The Cytoplasmic segment spans residues M1–L10. A helical; Signal-anchor for type II membrane protein membrane pass occupies residues V11–F31. The Lumenal portion of the chain corresponds to N32–D274. Residues Y151 to D270 enclose the Fe2OG dioxygenase domain. H169 and D171 together coordinate Fe cation. N242 carries N-linked (GlcNAc...) asparagine glycosylation. H251 provides a ligand contact to Fe cation. Position 261 (K261) interacts with 2-oxoglutarate.

It belongs to the P4HA family. Fe(2+) is required as a cofactor. Requires L-ascorbate as cofactor. As to expression, expressed in epidermal root hair cells (trichoblasts) root hairless cells (atrichoblasts).

The protein resides in the endoplasmic reticulum membrane. The catalysed reaction is L-prolyl-[collagen] + 2-oxoglutarate + O2 = trans-4-hydroxy-L-prolyl-[collagen] + succinate + CO2. Functionally, catalyzes the post-translational formation of 4-hydroxyproline in -Xaa-Pro-Gly- sequences in proline-rich peptide sequences of plant glycoproteins and other proteins. Hydroxyprolines are important constituent of many plant cell wall glycoproteins such as extensins, hydroxyproline-rich glycoproteins, lectins and arabinogalactan proteins. Possesses high affinity for leucine-rich repeat and proline-rich extensins of root cell walls that are essential for root hair development. Hydroxyprolines define the subsequent O-glycosylation sites by arabinosyltransferases which elongate the O-arabinosides on extensins. This Arabidopsis thaliana (Mouse-ear cress) protein is Prolyl 4-hydroxylase 13.